The sequence spans 227 residues: Orotidine 5'-phosphate decarboxylase (227 aa).

Substrate-binding positions include D8, K30, 59 to 68 (DLKLYDIPYT), T118, R178, Q187, G207, and R208. K61 functions as the Proton donor in the catalytic mechanism.

Belongs to the OMP decarboxylase family. Type 1 subfamily. Homodimer.

It catalyses the reaction orotidine 5'-phosphate + H(+) = UMP + CO2. The protein operates within pyrimidine metabolism; UMP biosynthesis via de novo pathway; UMP from orotate: step 2/2. Functionally, catalyzes the decarboxylation of orotidine 5'-monophosphate (OMP) to uridine 5'-monophosphate (UMP). This is Orotidine 5'-phosphate decarboxylase from Helicobacter pylori (strain J99 / ATCC 700824) (Campylobacter pylori J99).